A 586-amino-acid chain; its full sequence is Phosphomethylpyrimidine synthase (586 aa).

The segment at 1-58 (MKQSVSAEQIELKSSLPGSKKVYVDGPREGMKVPMREIEQSDTNGVPNPPIRVYDTSG) is disordered. Residues 22 to 39 (VYVDGPREGMKVPMREIE) show a composition bias toward basic and acidic residues. Substrate contacts are provided by residues N193, M222, Y251, H287, 307–309 (SRG), 348–351 (DGLR), and E387. Residue H391 participates in Zn(2+) binding. Y414 is a binding site for substrate. H455 serves as a coordination point for Zn(2+). Residues C535, C538, and C543 each contribute to the [4Fe-4S] cluster site.

This sequence belongs to the ThiC family. Requires [4Fe-4S] cluster as cofactor.

The catalysed reaction is 5-amino-1-(5-phospho-beta-D-ribosyl)imidazole + S-adenosyl-L-methionine = 4-amino-2-methyl-5-(phosphooxymethyl)pyrimidine + CO + 5'-deoxyadenosine + formate + L-methionine + 3 H(+). The protein operates within cofactor biosynthesis; thiamine diphosphate biosynthesis. Its function is as follows. Catalyzes the synthesis of the hydroxymethylpyrimidine phosphate (HMP-P) moiety of thiamine from aminoimidazole ribotide (AIR) in a radical S-adenosyl-L-methionine (SAM)-dependent reaction. In Bacillus thuringiensis (strain Al Hakam), this protein is Phosphomethylpyrimidine synthase.